Here is an 804-residue protein sequence, read N- to C-terminus: Leucine--tRNA ligase (804 aa).

The short motif at 39 to 50 (PFPSGKGLHVGH) is the 'HIGH' region element. The short motif at 573–577 (KMSKS) is the 'KMSKS' region element. Lys576 provides a ligand contact to ATP.

Belongs to the class-I aminoacyl-tRNA synthetase family.

It is found in the cytoplasm. It carries out the reaction tRNA(Leu) + L-leucine + ATP = L-leucyl-tRNA(Leu) + AMP + diphosphate. In Lactobacillus acidophilus (strain ATCC 700396 / NCK56 / N2 / NCFM), this protein is Leucine--tRNA ligase.